A 433-amino-acid polypeptide reads, in one-letter code: 3-phosphoshikimate 1-carboxyvinyltransferase (433 aa).

Residues Lys-23, Ser-24, and Arg-28 each contribute to the 3-phosphoshikimate site. Residue Lys-23 participates in phosphoenolpyruvate binding. Residues Gly-95 and Arg-123 each contribute to the phosphoenolpyruvate site. Positions 170, 171, 172, 198, 317, and 344 each coordinate 3-phosphoshikimate. A phosphoenolpyruvate-binding site is contributed by Gln-172. The active-site Proton acceptor is Asp-317. Phosphoenolpyruvate-binding residues include Arg-348, Arg-391, and Lys-416.

It belongs to the EPSP synthase family. Monomer.

The protein resides in the cytoplasm. It catalyses the reaction 3-phosphoshikimate + phosphoenolpyruvate = 5-O-(1-carboxyvinyl)-3-phosphoshikimate + phosphate. It functions in the pathway metabolic intermediate biosynthesis; chorismate biosynthesis; chorismate from D-erythrose 4-phosphate and phosphoenolpyruvate: step 6/7. Its function is as follows. Catalyzes the transfer of the enolpyruvyl moiety of phosphoenolpyruvate (PEP) to the 5-hydroxyl of shikimate-3-phosphate (S3P) to produce enolpyruvyl shikimate-3-phosphate and inorganic phosphate. The sequence is that of 3-phosphoshikimate 1-carboxyvinyltransferase from Neisseria meningitidis serogroup C / serotype 2a (strain ATCC 700532 / DSM 15464 / FAM18).